The following is a 130-amino-acid chain: Small ribosomal subunit protein uS9 (130 aa).

This sequence belongs to the universal ribosomal protein uS9 family.

The protein is Small ribosomal subunit protein uS9 of Chromobacterium violaceum (strain ATCC 12472 / DSM 30191 / JCM 1249 / CCUG 213 / NBRC 12614 / NCIMB 9131 / NCTC 9757 / MK).